The chain runs to 398 residues: DJ-1 protein homolog E (398 aa).

PfpI endopeptidase domains are found at residues 7 to 199 (KSAL…ESLG) and 210 to 393 (ASVL…TALG).

The protein belongs to the peptidase C56 family. As to quaternary structure, homotrimer. In terms of tissue distribution, expressed in roots and cauline leaves.

In terms of biological role, may be involved in oxidative stress response. This is DJ-1 protein homolog E (DJ1E) from Arabidopsis thaliana (Mouse-ear cress).